The primary structure comprises 425 residues: Nuclear pore complex-interacting protein family member B6 (425 aa).

Residues Ser332–His414 are disordered. Positions Glu353 to Glu395 are enriched in basic and acidic residues. Residues Lys401–His414 show a composition bias toward basic residues.

This sequence belongs to the NPIP family.

The polypeptide is Nuclear pore complex-interacting protein family member B6 (NPIPB6) (Homo sapiens (Human)).